The primary structure comprises 149 residues: Small ribosomal subunit protein uS19 (149 aa).

This sequence belongs to the universal ribosomal protein uS19 family.

Protein S19 forms a complex with S13 that binds strongly to the 16S ribosomal RNA. In Methanopyrus kandleri (strain AV19 / DSM 6324 / JCM 9639 / NBRC 100938), this protein is Small ribosomal subunit protein uS19.